Reading from the N-terminus, the 194-residue chain is Ribosome maturation factor RimM (194 aa).

A PRC barrel domain is found at 113–194 (DGEYYWIDLI…RIVADWGLDY (82 aa)).

It belongs to the RimM family. Binds ribosomal protein uS19.

It is found in the cytoplasm. Functionally, an accessory protein needed during the final step in the assembly of 30S ribosomal subunit, possibly for assembly of the head region. Essential for efficient processing of 16S rRNA. May be needed both before and after RbfA during the maturation of 16S rRNA. It has affinity for free ribosomal 30S subunits but not for 70S ribosomes. The polypeptide is Ribosome maturation factor RimM (Leptothrix cholodnii (strain ATCC 51168 / LMG 8142 / SP-6) (Leptothrix discophora (strain SP-6))).